The sequence spans 79 residues: Acyl carrier protein (79 aa).

The Carrier domain maps to 4 to 79 (AEIKDKVYDI…QAIDYIVNKK (76 aa)). Ser39 bears the O-(pantetheine 4'-phosphoryl)serine mark.

The protein belongs to the acyl carrier protein (ACP) family. In terms of processing, 4'-phosphopantetheine is transferred from CoA to a specific serine of apo-ACP by AcpS. This modification is essential for activity because fatty acids are bound in thioester linkage to the sulfhydryl of the prosthetic group.

The protein resides in the cytoplasm. The protein operates within lipid metabolism; fatty acid biosynthesis. Carrier of the growing fatty acid chain in fatty acid biosynthesis. The sequence is that of Acyl carrier protein from Pelodictyon phaeoclathratiforme (strain DSM 5477 / BU-1).